The chain runs to 378 residues: Valine--tRNA ligase (378 aa).

A coiled-coil region spans residues 307-377 (AGFINKEAEL…IQEQYKAIEA (71 aa)).

The protein belongs to the class-I aminoacyl-tRNA synthetase family. ValS type 1 subfamily. In terms of assembly, monomer.

The protein resides in the cytoplasm. It catalyses the reaction tRNA(Val) + L-valine + ATP = L-valyl-tRNA(Val) + AMP + diphosphate. In terms of biological role, catalyzes the attachment of valine to tRNA(Val). As ValRS can inadvertently accommodate and process structurally similar amino acids such as threonine, to avoid such errors, it has a 'posttransfer' editing activity that hydrolyzes mischarged Thr-tRNA(Val) in a tRNA-dependent manner. The sequence is that of Valine--tRNA ligase (valS) from Haemophilus parainfluenzae.